The following is a 218-amino-acid chain: MKVIIPVSPINSLKTRLSEFLSSEERKNLLLNMLRDIKKALEGLDVVVVSRDDEILDFAKYELKAEIVKEKYKGLNNAIKQAFDEIDDEEVIIIPADIPLIKKKHIEDILKLSKDYDLIIASSRGGGTNLLYLKSKNLIELRYEGFSFLKHLEEAEKRNLRYYIYDSFLISVDINTPEDLGEIFIHGDNTYTKNYLKGLGIEVEPKHSSAGRFVVKRR.

Belongs to the CofC family. Homodimer.

The catalysed reaction is (2S)-2-phospholactate + GTP + H(+) = (2S)-lactyl-2-diphospho-5'-guanosine + diphosphate. The protein operates within cofactor biosynthesis; coenzyme F420 biosynthesis. Functionally, guanylyltransferase that catalyzes the activation of (2S)-2-phospholactate (2-PL) as (2S)-lactyl-2-diphospho-5'-guanosine, via the condensation of 2-PL with GTP. It is involved in the biosynthesis of coenzyme F420, a hydride carrier cofactor. The chain is 2-phospho-L-lactate guanylyltransferase from Methanocaldococcus fervens (strain DSM 4213 / JCM 15782 / AG86) (Methanococcus fervens).